The primary structure comprises 331 residues: UPF0194 membrane protein YbhG (331 aa).

Positions 1-15 (MKKPVVIGLAVVVLA) are cleaved as a signal peptide. The stretch at 107 to 208 (EEIAQAAAAV…LNLQDSTLIA (102 aa)) forms a coiled coil.

This sequence belongs to the UPF0194 family.

Its subcellular location is the periplasm. In Escherichia coli O157:H7 (strain EC4115 / EHEC), this protein is UPF0194 membrane protein YbhG.